The chain runs to 519 residues: Maturase K (519 aa).

Belongs to the intron maturase 2 family. MatK subfamily.

Its subcellular location is the plastid. The protein resides in the chloroplast. In terms of biological role, usually encoded in the trnK tRNA gene intron. Probably assists in splicing its own and other chloroplast group II introns. The polypeptide is Maturase K (Aesculus pavia (Red buckeye)).